Consider the following 416-residue polypeptide: Ribosome biogenesis protein WDR12 homolog (416 aa).

The tract at residues 7–89 (VQVRFFTKQK…ESVVEIEYLE (83 aa)) is ubiquitin-like (UBL) domain. WD repeat units follow at residues 101 to 138 (VHDDWVSSVSRCKNCIITGSYDNCVQIWDDQGSCLAKV), 140 to 184 (GHTS…ASCV), 189 to 228 (GHTQSVDSISINPSATKFCSGSWDKTLKLWSAVVNPEGGD), 259 to 297 (GHTQAVSSVVWMDRTTICSAGWDHCIRLWDAESGVNKQT), 299 to 338 (TGSKVFCEIAYSALNQCLASGSADKYIRLWDHRAEDGQVV), 344 to 384 (SHQG…TPLY), and 388 to 416 (GHQDKVMCVRWSSSRHLMSGGTDNQLILY). A disordered region spans residues 226–245 (GGDEGENGSLSKKQKTTGVK).

Belongs to the WD repeat WDR12/YTM1 family.

The protein localises to the nucleus. The protein resides in the nucleolus. Its subcellular location is the nucleoplasm. Functionally, required for maturation of ribosomal RNAs and formation of the large ribosomal subunit. In Nematostella vectensis (Starlet sea anemone), this protein is Ribosome biogenesis protein WDR12 homolog.